The sequence spans 332 residues: Glycerol-3-phosphate dehydrogenase [NAD(P)+] (332 aa).

Positions 11, 30, and 108 each coordinate NADPH. Residues lysine 108, glycine 137, and serine 139 each contribute to the sn-glycerol 3-phosphate site. Residue alanine 141 participates in NADPH binding. Positions 192, 245, 255, 256, and 257 each coordinate sn-glycerol 3-phosphate. The active-site Proton acceptor is the lysine 192. An NADPH-binding site is contributed by arginine 256. Valine 280 and glutamate 282 together coordinate NADPH.

This sequence belongs to the NAD-dependent glycerol-3-phosphate dehydrogenase family.

Its subcellular location is the cytoplasm. The catalysed reaction is sn-glycerol 3-phosphate + NAD(+) = dihydroxyacetone phosphate + NADH + H(+). The enzyme catalyses sn-glycerol 3-phosphate + NADP(+) = dihydroxyacetone phosphate + NADPH + H(+). The protein operates within membrane lipid metabolism; glycerophospholipid metabolism. Functionally, catalyzes the reduction of the glycolytic intermediate dihydroxyacetone phosphate (DHAP) to sn-glycerol 3-phosphate (G3P), the key precursor for phospholipid synthesis. In Burkholderia thailandensis (strain ATCC 700388 / DSM 13276 / CCUG 48851 / CIP 106301 / E264), this protein is Glycerol-3-phosphate dehydrogenase [NAD(P)+].